A 393-amino-acid polypeptide reads, in one-letter code: Staphopain B (393 aa).

A signal peptide spans 1 to 36 (MNSSCKTRVFNIISIIMVSMLILSLGAFANNNKAKA). Residues 37 to 219 (DSHSKQLEIN…KVEENEAIQE (183 aa)) constitute a propeptide that is removed on maturation. Active-site residues include C243, H340, and N360.

It belongs to the peptidase C47 family. As to quaternary structure, in the cytoplasm, prematurely activated/folded SspB forms a stable non-covalent complex with SspC. Proteolytically cleaved by staphylococcal serine protease (SspA).

It localises to the secreted. Prematurely activated/folded staphopain B is inhibited by staphostatin B (SspC), which is probably required to protect staphylococcal cytoplasmic proteins from degradation by SspB. Cysteine protease that plays an important role in the inhibition of host innate immune response. Degrades host elastin, fibrogen, fibronectin and kininogen. Blocks phagocytosis of opsonised S.aureus by neutrophils and monocytes by inducing their death in a proteolytic activity-dependent manner. Decreases surface expression of the 'don't eat me' signal CD31 on neutrophils. Cleaves host galectin-3/LGALS3, thereby inhibiting the neutrophil-activating ability of the lectin. This is Staphopain B (sspB) from Staphylococcus aureus.